The sequence spans 640 residues: Scarecrow-like protein 27 (640 aa).

Composition is skewed to low complexity over residues 68–79 (SYSSTTTTLSSS) and 86–98 (TVTN…GDDN). The interval 68-98 (SYSSTTTTLSSSHGGGGTTVTNTTVTAGDDN) is disordered. The region spanning 259–639 (GMAGDDQSVI…KELVTVSAWK (381 aa)) is the GRAS domain. Positions 266 to 331 (SVIIEQLFNA…AEALLSLIHN (66 aa)) are leucine repeat I (LRI). Residues 350–422 (YRSFSETSPF…NRASSLKLTV (73 aa)) form a VHIID region. Residues 383–387 (IHIID) carry the VHIID motif. The leucine repeat II (LRII) stretch occupies residues 438–470 (FTEENLKTFAGEVKIPFEIELLSVELLLNPAYW). The tract at residues 480-565 (EAIAVNLPVN…RFWVQPSIEK (86 aa)) is PFYRE. Positions 568-639 (MKRHRWIERS…KELVTVSAWK (72 aa)) are SAW.

It belongs to the GRAS family. In terms of tissue distribution, expressed in seedlings, roots, cotyledons, leaves and flowers.

Its subcellular location is the nucleus. Functionally, probable transcription factor involved in plant development. The protein is Scarecrow-like protein 27 (SCL27) of Arabidopsis thaliana (Mouse-ear cress).